Reading from the N-terminus, the 1235-residue chain is Ubiquitin carboxyl-terminal hydrolase 40 (1235 aa).

Residues 41–482 form the USP domain; that stretch reads SGIRNQGGTC…SAYMLFYRKS (442 aa). Catalysis depends on C50, which acts as the Nucleophile. Catalysis depends on H305, which acts as the Proton acceptor. Positions 1180 to 1190 are enriched in basic and acidic residues; that stretch reads IRDDTGKEKQK. The interval 1180–1235 is disordered; the sequence is IRDDTGKEKQKQRALGRRKSQEALHEQSSYILSSAETPARPRAPETSLSIHVGSFR. Polar residues predominate over residues 1205–1215; it reads EQSSYILSSAE.

Belongs to the peptidase C19 family. In terms of tissue distribution, broadly expressed.

The catalysed reaction is Thiol-dependent hydrolysis of ester, thioester, amide, peptide and isopeptide bonds formed by the C-terminal Gly of ubiquitin (a 76-residue protein attached to proteins as an intracellular targeting signal).. In terms of biological role, may be catalytically inactive. This is Ubiquitin carboxyl-terminal hydrolase 40 (USP40) from Homo sapiens (Human).